A 166-amino-acid polypeptide reads, in one-letter code: Large ribosomal subunit protein uL10 (166 aa).

The protein belongs to the universal ribosomal protein uL10 family. Part of the ribosomal stalk of the 50S ribosomal subunit. The N-terminus interacts with L11 and the large rRNA to form the base of the stalk. The C-terminus forms an elongated spine to which L12 dimers bind in a sequential fashion forming a multimeric L10(L12)X complex.

Its function is as follows. Forms part of the ribosomal stalk, playing a central role in the interaction of the ribosome with GTP-bound translation factors. This chain is Large ribosomal subunit protein uL10, found in Listeria monocytogenes serotype 4b (strain CLIP80459).